Consider the following 969-residue polypeptide: Levansucrase (969 aa).

An N-terminal signal peptide occupies residues 1 to 52; the sequence is MDITVNSQSNTVAPKQAECKKMRYSIRKVATVGATSALVGTLAFLGATQVKA. A compositionally biased stretch (low complexity) spans 89–103; it reads SEAVESSVAHSEVAT. A disordered region spans residues 89–169; it reads SEAVESSVAH…STASSEAADT (81 aa). Residues 106 to 116 are compositionally biased toward polar residues; it reads VTETQPSNTTP. Residues 124 to 166 show a composition bias toward low complexity; it reads SSTVVTSSSDATTPSATVAAVSAPAHTSEAAVEAPTSTASSEA. Residues Trp286, Asp287, and Ser356 each contribute to the sucrose site. Asp287 acts as the Nucleophile in catalysis. Asp443 serves as a coordination point for Ca(2+). Sucrose contacts are provided by Arg448 and Asp449. Gln473, Asn512, and Asp544 together coordinate Ca(2+). Glu545 contributes to the sucrose binding site. Glu547 functions as the Proton donor/acceptor in the catalytic mechanism. Arg565 lines the sucrose pocket. 2 disordered regions span residues 746 to 843 and 860 to 934; these read VKDG…VGDR and IVAT…SEGS. Residues 747-758 are compositionally biased toward basic and acidic residues; the sequence is KDGKDKKADKPE. Over residues 776–789 the composition is skewed to polar residues; it reads KPGTSKPADNNQPS. The span at 872–910 shows a compositional bias: basic and acidic residues; it reads VKEESVTETEAPKPVKSEEKVQSHGVDKANEVTKSDESS. Polar residues predominate over residues 924–934; sequence TPKTPSDSEGS. A helical transmembrane segment spans residues 938-958; that stretch reads ILSILATIFAAIASLALLGYG.

The protein belongs to the glycosyl hydrolase 68 family.

Its subcellular location is the cell membrane. The protein localises to the cell surface. It carries out the reaction [6)-beta-D-fructofuranosyl-(2-&gt;](n) alpha-D-glucopyranoside + sucrose = [6)-beta-D-fructofuranosyl-(2-&gt;](n+1) alpha-D-glucopyranoside + D-glucose. Its activity is regulated as follows. Ca(2+) may play an important structural role and promote stability of levansucrase. Catalyzes the synthesis of levan, a fructose polymer, by transferring the fructosyl moiety from sucrose to a growing acceptor molecule. Also displays sucrose hydrolase activity. This is Levansucrase from Streptococcus salivarius.